The primary structure comprises 302 residues: Short-chain dehydrogenase/reductase 1 (302 aa).

NADP(+) contacts are provided by residues 20 to 23, Arg-43, 71 to 72, and Asn-98; these read NKGL and DV. Position 170 (Ser-170) interacts with substrate. NADP(+) is bound by residues Tyr-226, Lys-230, and 257–262; that span reads VKTDIN. Residue Tyr-226 is the Proton acceptor of the active site.

The protein belongs to the short-chain dehydrogenases/reductases (SDR) family. As to expression, mainly expressed in flowers and flower buds, to a lesser extent in leaves and, at low levels, in stems and roots.

Its pathway is secondary metabolite biosynthesis; terpenoid biosynthesis. In terms of biological role, component of the oleanane-type triterpene saponins (e.g. saponarioside A and saponarioside B) biosynthetic pathway, leading to the production of natural products with detergent properties used as traditional sources of soap. A dehydrogenase/reductase that, together with UGT74CD1, mediates the conversion of QA-tri to QA-triF; UGT74CD1 may transfer 4-keto-6-deoxy-glucose to QA-tri, which is in turn reduced to D-fucose by SDR1, thus leading to QA-triF formation via the initiation of the C-28 sugar chain. The polypeptide is Short-chain dehydrogenase/reductase 1 (Saponaria officinalis (Common soapwort)).